The primary structure comprises 310 residues: Vomeronasal type-1 receptor 93 (310 aa).

Topologically, residues 1–20 (MNKDNTLHVDTIMKITMFSE) are extracellular. Residues 21–41 (VSVGILANSILFFAHLCMLLG) form a helical membrane-spanning segment. Over 42–59 (ENKPKPIHLYIASLSLTQ) the chain is Cytoplasmic. Residues 60 to 80 (LMLLITMGLIAADMFISQGIW) form a helical membrane-spanning segment. Residues 81 to 93 (DSTSCQSLIYLHR) lie on the Extracellular side of the membrane. C85 and C172 are oxidised to a cystine. The helical transmembrane segment at 94–114 (LSRGFTLSAACLLNVFWMITL) threads the bilayer. Residues 115 to 134 (SSKKSRLTKFKHNSPHHISG) lie on the Cytoplasmic side of the membrane. Residues 135–155 (AFLLLCVLYMCFSSHLILSII) form a helical membrane-spanning segment. The Extracellular portion of the chain corresponds to 156 to 193 (ATPNLTSDNFMYVTKSCSFLPMCYSRTSMFSTTIAVRE). A glycan (N-linked (GlcNAc...) asparagine) is linked at N159. A helical transmembrane segment spans residues 194-214 (AFFIGLMALSSGYLVAFLWRH). The Cytoplasmic segment spans residues 215-238 (RKQAQHLHSTGLSSKASPEQRATE). A helical membrane pass occupies residues 239–259 (TILLLMSFFVVLYILENVVFY). The Extracellular segment spans residues 260-269 (SRMKFKDGST). A helical transmembrane segment spans residues 270-290 (FYCVQIIVSHSYATVSSFVFI). The Cytoplasmic portion of the chain corresponds to 291–310 (FTEKRMTKILRSVCTRIINI).

Belongs to the G-protein coupled receptor 1 family. As to expression, expressed in 1-4% of neurons of the vomeronasal organ. Only one pheromone receptor gene may be expressed in a particular neuron. Not expressed in the main olfactory epithelium.

It is found in the cell membrane. Putative pheromone receptor implicated in the regulation of social as well as reproductive behavior. This Rattus norvegicus (Rat) protein is Vomeronasal type-1 receptor 93 (Vom1r93).